The sequence spans 129 residues: MSNVPAELKYSKEHEWLRKEADGTYTVGITEHAQELLGDMVFVDLPEVGATVSAGDDCAVAESVKAASDIYAPVSGEIVAVNDALSDSPELVNSEPYTGGWIFKIKASDESELESLLDATAYEALLEDE.

The Lipoyl-binding domain occupies threonine 24–lysine 106. Residue lysine 65 is modified to N6-lipoyllysine.

It belongs to the GcvH family. As to quaternary structure, the glycine cleavage system is composed of four proteins: P, T, L and H. Requires (R)-lipoate as cofactor.

The glycine cleavage system catalyzes the degradation of glycine. The H protein shuttles the methylamine group of glycine from the P protein to the T protein. This is Glycine cleavage system H protein from Salmonella choleraesuis (strain SC-B67).